Reading from the N-terminus, the 284-residue chain is Cystinosin homolog (284 aa).

The next 7 membrane-spanning stretches (helical) occupy residues 3 to 23, 37 to 57, 86 to 106, 116 to 136, 139 to 159, 181 to 201, and 216 to 236; these read ALSI…SLSF, IGLS…YSVF, IAFA…CFIY, LGIG…ILGF, VFTW…ITFI, NVLL…LDVA, and LGLS…HYIL. The 67-residue stretch at 4 to 70 folds into the PQ-loop 1 domain; that stretch reads LSIISIIIGW…LYFDKLVKNE (67 aa). The 55-residue stretch at 154–208 folds into the PQ-loop 2 domain; the sequence is LFITFIKYIPQAYLNFKNKSTSGWSVHNVLLDFSGGVLSLLQMFLDVADSGNWNI. Positions 247–269 are disordered; that stretch reads NLNDNNIPNNNNNNNNNINNNTP.

Belongs to the cystinosin family.

The protein localises to the lysosome membrane. The catalysed reaction is L-cystine(out) + H(+)(out) = L-cystine(in) + H(+)(in). Functionally, cystine/H(+) symporter that mediates export of cystine, the oxidized dimer of cysteine, from lysosomes. The polypeptide is Cystinosin homolog (ctns) (Dictyostelium discoideum (Social amoeba)).